A 205-amino-acid chain; its full sequence is Small ribosomal subunit protein uS4 (205 aa).

Positions methionine 1–aspartate 12 are enriched in basic residues. A disordered region spans residues methionine 1–glycine 49. The region spanning arginine 94–valine 155 is the S4 RNA-binding domain.

It belongs to the universal ribosomal protein uS4 family. Part of the 30S ribosomal subunit. Contacts protein S5. The interaction surface between S4 and S5 is involved in control of translational fidelity.

Functionally, one of the primary rRNA binding proteins, it binds directly to 16S rRNA where it nucleates assembly of the body of the 30S subunit. With S5 and S12 plays an important role in translational accuracy. The chain is Small ribosomal subunit protein uS4 from Methylorubrum populi (strain ATCC BAA-705 / NCIMB 13946 / BJ001) (Methylobacterium populi).